The sequence spans 358 residues: Capsid protein VP1/VP2 (358 aa).

Residues 1–15 are compositionally biased toward basic and acidic residues; sequence MADSTSMDHDGEQRG. A disordered region spans residues 1–37; sequence MADSTSMDHDGEQRGTKRKRDAGAGGSGAGIGKGTSN. Residues 23–33 are compositionally biased toward gly residues; the sequence is GAGGSGAGIGK.

The protein localises to the virion. Capsid protein self-assembles to form an icosahedral capsid with a T=1 symmetry, about 22 nm in diameter, and consisting of 60 copies of size variants of the capsid proteins, which differ in the N-terminushe capsid encapsulates the genomic ssDNA. Capsid proteins are responsible for the attachment to host cell receptors. This attachment induces virion internalization predominantly through clathrin-dependent endocytosis. This is Capsid protein VP1/VP2 (VP) from Aedes (Aedes densovirus).